Consider the following 314-residue polypeptide: Olfactory receptor 5P76 (314 aa).

Residues 1 to 28 (MAFLEDGNHTAVTGFILLGLTDDPVLRV) are Extracellular-facing. A glycan (N-linked (GlcNAc...) asparagine) is linked at Asn-8. Residues 29–49 (VLFVIILCIYLVTVSGNLSTI) form a helical membrane-spanning segment. Residues 50 to 57 (LLIRVSSQ) lie on the Cytoplasmic side of the membrane. Residues 58–78 (LHHPMYFFLSHLASADIGYSS) traverse the membrane as a helical segment. Residues 79-102 (SVTPNMLVNFLVERNTISYLGCGI) are Extracellular-facing. Cys-100 and Cys-192 are oxidised to a cystine. Residues 103-123 (QLGSAVFFGTVECFLLAAMAY) traverse the membrane as a helical segment. Residues 124 to 136 (DRFIAICSPLLYS) are Cytoplasmic-facing. A helical transmembrane segment spans residues 137 to 157 (NKMSTQVCVQLLVGSYIGGFL). At 158-199 (NASSFTLSFFSLVFCGPNRVNHFFCDFAPLVKLSCSDVSVPA) the chain is on the extracellular side. Residues 200–220 (VVPSFTAGSIIIVTIFVIAVS) traverse the membrane as a helical segment. Residues 221-240 (YIYILITILKMRSTEGRQKA) are Cytoplasmic-facing. A helical membrane pass occupies residues 241-261 (FSTCTSHLTAVTLFYGTITFI). The Extracellular segment spans residues 262 to 274 (YVMPKSSYSTDQN). Residues 275–295 (KVVSVFYMVVVPMLNPLIYSL) traverse the membrane as a helical segment. The Cytoplasmic portion of the chain corresponds to 296–314 (RNKEIKGALKRQLAKNTFS).

Belongs to the G-protein coupled receptor 1 family.

The protein resides in the cell membrane. Its function is as follows. Potential odorant receptor. The protein is Olfactory receptor 5P76 of Mus musculus (Mouse).